A 226-amino-acid chain; its full sequence is uncharacterized protein (226 aa).

2 disordered regions span residues 1 to 20 (MGAE…AVQT) and 205 to 226 (LDRK…QRDA).

This is an uncharacterized protein from Treponema pallidum (strain Nichols).